An 87-amino-acid chain; its full sequence is Small ribosomal subunit protein bS20 (87 aa).

The disordered stretch occupies residues 1–24; it reads MANTAQARKRARQSVERNKHNSSL.

This sequence belongs to the bacterial ribosomal protein bS20 family.

Binds directly to 16S ribosomal RNA. This Bordetella avium (strain 197N) protein is Small ribosomal subunit protein bS20.